Here is an 83-residue protein sequence, read N- to C-terminus: Small ribosomal subunit protein bS18 (83 aa).

The disordered stretch occupies residues 1-23 (MKQRNNAKRVRLEQTRRPKKNPL).

It belongs to the bacterial ribosomal protein bS18 family. Part of the 30S ribosomal subunit. Forms a tight heterodimer with protein bS6.

In terms of biological role, binds as a heterodimer with protein bS6 to the central domain of the 16S rRNA, where it helps stabilize the platform of the 30S subunit. This Corynebacterium efficiens (strain DSM 44549 / YS-314 / AJ 12310 / JCM 11189 / NBRC 100395) protein is Small ribosomal subunit protein bS18.